The following is a 157-amino-acid chain: MEKFPMTPRGFEKLKEELRWRQQSERPRIIEAIAEARAHGDLSENAEYHAAKEAQSLNEGRINELEDLVARAEVIDVSKLTGDRIKFGATVTMIDEDTEEEKIYQIVGDQEADVKEGRISISSPIARALIGKGEGDTIEVNAPGGSRSYEIIALKFV.

Belongs to the GreA/GreB family.

Functionally, necessary for efficient RNA polymerase transcription elongation past template-encoded arresting sites. The arresting sites in DNA have the property of trapping a certain fraction of elongating RNA polymerases that pass through, resulting in locked ternary complexes. Cleavage of the nascent transcript by cleavage factors such as GreA or GreB allows the resumption of elongation from the new 3'terminus. GreA releases sequences of 2 to 3 nucleotides. The polypeptide is Transcription elongation factor GreA (Brucella abortus (strain S19)).